Here is a 392-residue protein sequence, read N- to C-terminus: Succinate--CoA ligase [ADP-forming] subunit beta (392 aa).

The ATP-grasp domain occupies Lys9–Glu244. ATP-binding positions include Lys46, Gly53–Gly55, Glu99, Leu102, and Glu107. Positions 199 and 213 each coordinate Mg(2+). Substrate is bound by residues Asn264 and Gly321–Val323.

Belongs to the succinate/malate CoA ligase beta subunit family. In terms of assembly, heterotetramer of two alpha and two beta subunits. It depends on Mg(2+) as a cofactor.

The enzyme catalyses succinate + ATP + CoA = succinyl-CoA + ADP + phosphate. The catalysed reaction is GTP + succinate + CoA = succinyl-CoA + GDP + phosphate. It functions in the pathway carbohydrate metabolism; tricarboxylic acid cycle; succinate from succinyl-CoA (ligase route): step 1/1. Functionally, succinyl-CoA synthetase functions in the citric acid cycle (TCA), coupling the hydrolysis of succinyl-CoA to the synthesis of either ATP or GTP and thus represents the only step of substrate-level phosphorylation in the TCA. The beta subunit provides nucleotide specificity of the enzyme and binds the substrate succinate, while the binding sites for coenzyme A and phosphate are found in the alpha subunit. This Wolinella succinogenes (strain ATCC 29543 / DSM 1740 / CCUG 13145 / JCM 31913 / LMG 7466 / NCTC 11488 / FDC 602W) (Vibrio succinogenes) protein is Succinate--CoA ligase [ADP-forming] subunit beta.